The sequence spans 435 residues: Evolutionarily conserved signaling intermediate in Toll pathway, mitochondrial (435 aa).

Residues methionine 1–histidine 48 constitute a mitochondrion transit peptide. Residue lysine 372 forms a Glycyl lysine isopeptide (Lys-Gly) (interchain with G-Cter in ubiquitin) linkage. A disordered region spans residues leucine 401–serine 435.

This sequence belongs to the ECSIT family. In terms of assembly, interacts with MAP3K1, SMAD4 and TRAF6. Interacts with SMAD1 only after BMP4-treatment. Part of the mitochondrial complex I assembly/MCIA complex that comprises at least the core subunits TMEM126B, NDUFAF1, ECSIT and ACAD9 and complement subunits such as COA1 and TMEM186. Interacts with NDUFAF1. Interacts with ACAD9. Interacts with TRIM59. Interacts with TMEM70 and TMEM242. Interacts (when ubiquitinated) with NF-kappa-B subunits RELA and NFKB1. Interacts with RIGI, IFIT1 and MAVS; these interactions promote RLR-mediated type I IFN induction. Interacts with SQSTM1; this interaction inhibits TLR4 signaling via functional regulation of the TRAF6-ECSIT complex. Interacts with cereblon/CRBN; this interaction inhibits the ubiquitination of ECSIT. In terms of processing, ubiquitinated on Lys-372; leading to translocation in the nucleus together with RELA and NFKB1 and expression of NF-kappa-B-dependent genes. In terms of tissue distribution, detected in heart, brain, lung, liver, skeletal muscle, kidney and testis. Detected in embryonic mesoderm and epiblast, and in extraembryonic ectoderm.

The protein localises to the cytoplasm. Its subcellular location is the nucleus. It is found in the mitochondrion. Its function is as follows. Adapter protein that plays a role in different signaling pathways including TLRs and IL-1 pathways or innate antiviral induction signaling. Plays a role in the activation of NF-kappa-B by forming a signal complex with TRAF6 and TAK1/MAP3K7 to activate TAK1/MAP3K7 leading to activation of IKKs. Once ubiquitinated, interacts with the dissociated RELA and NFKB1 proteins and translocates to the nucleus where it induces NF-kappa-B-dependent gene expression. Plays a role in innate antiviral immune response by bridging the pattern recognition receptors RIGI and MDA5/IFIT1 to the MAVS complex at the mitochondrion. Promotes proteolytic activation of MAP3K1. Involved in the BMP signaling pathway. Required for normal embryonic development. In terms of biological role, as part of the MCIA complex, involved in the assembly of the mitochondrial complex I. The sequence is that of Evolutionarily conserved signaling intermediate in Toll pathway, mitochondrial from Mus musculus (Mouse).